Here is a 516-residue protein sequence, read N- to C-terminus: Putative thymidine phosphorylase (516 aa).

Belongs to the thymidine/pyrimidine-nucleoside phosphorylase family. Type 2 subfamily.

It catalyses the reaction thymidine + phosphate = 2-deoxy-alpha-D-ribose 1-phosphate + thymine. The polypeptide is Putative thymidine phosphorylase (Methylococcus capsulatus (strain ATCC 33009 / NCIMB 11132 / Bath)).